The following is a 473-amino-acid chain: ATP synthase subunit beta (473 aa).

153–160 contributes to the ATP binding site; that stretch reads GGAGVGKT.

This sequence belongs to the ATPase alpha/beta chains family. F-type ATPases have 2 components, CF(1) - the catalytic core - and CF(0) - the membrane proton channel. CF(1) has five subunits: alpha(3), beta(3), gamma(1), delta(1), epsilon(1). CF(0) has three main subunits: a(1), b(2) and c(9-12). The alpha and beta chains form an alternating ring which encloses part of the gamma chain. CF(1) is attached to CF(0) by a central stalk formed by the gamma and epsilon chains, while a peripheral stalk is formed by the delta and b chains.

The protein resides in the cell membrane. The enzyme catalyses ATP + H2O + 4 H(+)(in) = ADP + phosphate + 5 H(+)(out). Produces ATP from ADP in the presence of a proton gradient across the membrane. The catalytic sites are hosted primarily by the beta subunits. In Rickettsia africae (strain ESF-5), this protein is ATP synthase subunit beta.